The chain runs to 2592 residues: 6-hydroxymellein synthase cdmE (2592 aa).

Residues 1-11 are compositionally biased toward basic and acidic residues; the sequence is MVLHPSDRRFP. The segment at 1–25 is disordered; it reads MVLHPSDRRFPETNGVGGHSKDSSA. Residues 32 to 456 form the Ketosynthase family 3 (KS3) domain; that stretch reads LEPLAIVGFA…GTNAHVVLES (425 aa). Active-site for beta-ketoacyl synthase activity residues include Cys205, His340, and His379. The tract at residues 589-910 is malonyl-CoA:ACP transacylase (MAT) domain; that stretch reads VFTGQGAQWP…RYSHTITRKK (322 aa). An N-terminal hotdog fold region spans residues 978–1113; the sequence is HELLGSPDPD…GFIESKCESD (136 aa). Residues 978 to 1291 form a dehydratase (DH) domain region; that stretch reads HELLGSPDPD…IRGTELCLLS (314 aa). One can recognise a PKS/mFAS DH domain in the interval 978-1296; the sequence is HELLGSPDPD…LCLLSAGRGD (319 aa). A C-terminal hotdog fold region spans residues 1140–1296; that stretch reads TQIGSISAFY…LCLLSAGRGD (157 aa). Positions 1462 and 1484 each coordinate S-adenosyl-L-methionine. Positions 1483-1591 are methyltransferase (CMeT) domain; sequence LEIGTGFGSV…HSLLKPGGKL (109 aa). Residues 1887–2199 are enoyl reductase (ER) domain; the sequence is GLLVWSDDEA…NDSNMDTAVI (313 aa). Residues 2223–2398 form a ketoreductase (KR) domain region; sequence ATYVIAGGLG…IPGMSVNLGN (176 aa). The 78-residue stretch at 2509–2586 folds into the Carrier domain; sequence VAASHVTEAI…GLSEKIARQS (78 aa). Ser2546 is subject to O-(pantetheine 4'-phosphoryl)serine.

The enzyme catalyses 5 malonyl-CoA + AH2 + 5 H(+) = 6-hydroxymellein + A + 5 CO2 + 5 CoA + H2O. The protein operates within secondary metabolite biosynthesis; terpenoid biosynthesis. In terms of biological role, highly reducing polyketide synthase; part of the gene cluster that mediates the biosynthesis of chrodrimanin B, a meroterpenoid that acts as a potent blocker of insect GABA-gated chloride channels. The first step of the pathway is the biosynthesis of 6-hydroxymellein by the polyketide synthase cdmE. The prenyltransferase cdmH acts as a 6-hydroxymellein 5-farnesyltransferase and produces the hydrophobic metabolite verruculide C. The FAD-dependent monooxygenase cdmI further converts verruculide C into verruculide B. The terpene cyclase cdmG then produced the pentacyclic molecule 3-hydroxypentacecilide A, the backbone structure of chrodrimanin B, via folding the farnesyl moiety of the substrate into the chair-boat conformation. The short-chain dehydrogenase/reductase cdmF functions as the 3-OH dehydrogenase that oxidizes the C-3 hydroxyl group of 3-hydroxypentacecilide A and produces chrodrimanin C, the dehydrogenated product of 3-hydroxypentacecilide A. The cytochrome P450 monooxygenase cdmJ then accepts both 3-hydroxypentacecilide A and chrodrimanin C and functions as a C-7-beta-hydroxylase to produce respectively chrodrimanin H and chrodrimanin F. The dioxygenase cdmA accepts chrodrimanin H to afford chrodrimanin E, which is further transformed to chrodrimanin A by the dioxygenase cdmD. CdmA can also accept chrodrimanin C as substrate to convert it into verruculide A, which is further converted into chrodrimanin T by cdmD. The last step of the biosynthesis is proposed to be performed by the acetyltransferase cdmC which acetylates chrodrimanin A to yield chrodrimanin B. The pathway may also lead to the production of additional shunt products, including chrodrimanins T and U. The sequence is that of 6-hydroxymellein synthase cdmE from Talaromyces verruculosus (Penicillium verruculosum).